The following is a 103-amino-acid chain: Co-chaperonin GroES (103 aa).

It belongs to the GroES chaperonin family. As to quaternary structure, heptamer of 7 subunits arranged in a ring. Interacts with the chaperonin GroEL.

It localises to the cytoplasm. In terms of biological role, together with the chaperonin GroEL, plays an essential role in assisting protein folding. The GroEL-GroES system forms a nano-cage that allows encapsulation of the non-native substrate proteins and provides a physical environment optimized to promote and accelerate protein folding. GroES binds to the apical surface of the GroEL ring, thereby capping the opening of the GroEL channel. In Dinoroseobacter shibae (strain DSM 16493 / NCIMB 14021 / DFL 12), this protein is Co-chaperonin GroES.